Consider the following 217-residue polypeptide: Transmembrane protein 253 (217 aa).

4 helical membrane-spanning segments follow: residues 33 to 53 (LVLA…AVSV), 62 to 82 (MATA…TVTL), 96 to 116 (MMIF…VEVM), and 138 to 158 (LSAE…LFLL). The tract at residues 187 to 217 (PGLENGPTVASTGANERVGQREQTRAALLPP) is disordered.

Its subcellular location is the membrane. The chain is Transmembrane protein 253 (TMEM253) from Homo sapiens (Human).